A 26-amino-acid polypeptide reads, in one-letter code: Oxyopinin-3a (26 aa).

Expressed by the venom gland.

Its subcellular location is the secreted. May have cytolytic and antimicrobial activity. The polypeptide is Oxyopinin-3a (Oxyopes takobius (Lynx spider)).